Reading from the N-terminus, the 152-residue chain is Transcriptional regulator MraZ (152 aa).

2 consecutive SpoVT-AbrB domains span residues 5 to 52 (ATLV…PLPE) and 81 to 124 (ASEC…DETT).

The protein belongs to the MraZ family. In terms of assembly, forms oligomers.

It is found in the cytoplasm. Its subcellular location is the nucleoid. Negatively regulates its own expression and that of the subsequent genes in the proximal part of the division and cell wall (dcw) gene cluster. Acts by binding directly to DNA. May also regulate the expression of genes outside the dcw cluster. The polypeptide is Transcriptional regulator MraZ (Shigella sonnei (strain Ss046)).